Consider the following 331-residue polypeptide: DNA-directed RNA polymerase subunit alpha (331 aa).

The alpha N-terminal domain (alpha-NTD) stretch occupies residues 1–242 (MEKFLRYNIQ…EHYKPIVTEL (242 aa)). The segment at 258–331 (VSSSKSSLAI…RNLKLKEEQN (74 aa)) is alpha C-terminal domain (alpha-CTD).

It belongs to the RNA polymerase alpha chain family. In terms of assembly, homodimer. The RNAP catalytic core consists of 2 alpha, 1 beta, 1 beta' and 1 omega subunit. When a sigma factor is associated with the core the holoenzyme is formed, which can initiate transcription.

The catalysed reaction is RNA(n) + a ribonucleoside 5'-triphosphate = RNA(n+1) + diphosphate. DNA-dependent RNA polymerase catalyzes the transcription of DNA into RNA using the four ribonucleoside triphosphates as substrates. In Malacoplasma penetrans (strain HF-2) (Mycoplasma penetrans), this protein is DNA-directed RNA polymerase subunit alpha.